A 158-amino-acid polypeptide reads, in one-letter code: Transcription elongation factor GreA (158 aa).

The protein belongs to the GreA/GreB family.

In terms of biological role, necessary for efficient RNA polymerase transcription elongation past template-encoded arresting sites. The arresting sites in DNA have the property of trapping a certain fraction of elongating RNA polymerases that pass through, resulting in locked ternary complexes. Cleavage of the nascent transcript by cleavage factors such as GreA or GreB allows the resumption of elongation from the new 3'terminus. GreA releases sequences of 2 to 3 nucleotides. In Rhizobium etli (strain ATCC 51251 / DSM 11541 / JCM 21823 / NBRC 15573 / CFN 42), this protein is Transcription elongation factor GreA.